The following is a 252-amino-acid chain: Hydroxyacylglutathione hydrolase (252 aa).

Residues His54, His56, Asp58, His59, His111, Asp128, and His166 each contribute to the Zn(2+) site.

Belongs to the metallo-beta-lactamase superfamily. Glyoxalase II family. In terms of assembly, monomer. It depends on Zn(2+) as a cofactor.

The catalysed reaction is an S-(2-hydroxyacyl)glutathione + H2O = a 2-hydroxy carboxylate + glutathione + H(+). It functions in the pathway secondary metabolite metabolism; methylglyoxal degradation; (R)-lactate from methylglyoxal: step 2/2. Thiolesterase that catalyzes the hydrolysis of S-D-lactoyl-glutathione to form glutathione and D-lactic acid. This is Hydroxyacylglutathione hydrolase from Aliivibrio salmonicida (strain LFI1238) (Vibrio salmonicida (strain LFI1238)).